A 626-amino-acid polypeptide reads, in one-letter code: Chaperone protein HtpG (626 aa).

Residues 1–341 (MIKKEFKAES…SEDLSLNISR (341 aa)) are a; substrate-binding. Residues 342–552 (EMLQHDRQLK…DGDVTIEMEK (211 aa)) form a b region. The interval 553–626 (ILSAMPNNQE…FTNDICKLMS (74 aa)) is c.

It belongs to the heat shock protein 90 family. In terms of assembly, homodimer.

It is found in the cytoplasm. In terms of biological role, molecular chaperone. Has ATPase activity. In Alkaliphilus metalliredigens (strain QYMF), this protein is Chaperone protein HtpG.